Here is a 385-residue protein sequence, read N- to C-terminus: Elongation factor Ts, mitochondrial (385 aa).

The transit peptide at 1 to 50 (MAWSQSARKPMIGLLFRAQQHGARGYSYSAFQAHLSSSNVDQSATLLRRF) directs the protein to the mitochondrion.

It belongs to the EF-Ts family.

The protein localises to the mitochondrion. Its function is as follows. Associates with the EF-Tu.GDP complex and induces the exchange of GDP to GTP. It remains bound to the aminoacyl-tRNA.EF-Tu.GTP complex up to the GTP hydrolysis stage on the ribosome. This Oryza sativa subsp. indica (Rice) protein is Elongation factor Ts, mitochondrial.